The sequence spans 129 residues: Small ribosomal subunit protein uS11 (129 aa).

The protein belongs to the universal ribosomal protein uS11 family. As to quaternary structure, part of the 30S ribosomal subunit. Interacts with proteins S7 and S18. Binds to IF-3.

Its function is as follows. Located on the platform of the 30S subunit, it bridges several disparate RNA helices of the 16S rRNA. Forms part of the Shine-Dalgarno cleft in the 70S ribosome. The chain is Small ribosomal subunit protein uS11 from Pseudomonas entomophila (strain L48).